The following is a 257-amino-acid chain: MSRKKTPKSKGGSVPAASTLPAAANGPRLAHPRTARPGPEAPPNGPPQSGRPSLGGTGDFYDVAFKVMLVGDSGVGKTCLLVRFKDGAFLAGTFISTVGIDFRNKVLDVDGMKVKLQIWDTAGQERFRSVTHAYYRDAHALLLLYDITNKDSFDNIQAWLTEIQEYAQQDVVLMLLGNKVDSTQERVVKREDGEKLAKEYGLPFMETSAKSGLNVDLAFTAIAKELKQRSTKAPSEPRFRLHDYVKREGRGVSCCRL.

The segment at 1–53 (MSRKKTPKSKGGSVPAASTLPAAANGPRLAHPRTARPGPEAPPNGPPQSGRPS) is disordered. GTP is bound by residues serine 73, glycine 74, valine 75, glycine 76, lysine 77, threonine 78, cysteine 79, serine 96, and threonine 97. Residue threonine 78 coordinates Mg(2+). Short sequence motifs (switch) lie at residues 87–102 (GAFL…GIDF) and 120–137 (DTAG…YYRD). Mg(2+)-binding residues include threonine 97 and aspartate 120. 6 residues coordinate GTP: glycine 123, asparagine 178, lysine 179, aspartate 181, alanine 209, and lysine 210. S-geranylgeranyl cysteine attachment occurs at residues cysteine 254 and cysteine 255.

This sequence belongs to the small GTPase superfamily. Rab family. Interacts with ADRA2B. Interacts with RIMS1. It depends on Mg(2+) as a cofactor. In terms of tissue distribution, expressed in pancreas, kidney, brain, submandibular gland, and lung.

It localises to the cytoplasmic vesicle. The protein resides in the secretory vesicle membrane. The protein localises to the golgi apparatus membrane. The enzyme catalyses GTP + H2O = GDP + phosphate + H(+). Regulated by guanine nucleotide exchange factors (GEFs) which promote the exchange of bound GDP for free GTP. Regulated by GTPase activating proteins (GAPs) which increase the GTP hydrolysis activity. Inhibited by GDP dissociation inhibitors (GDIs). In terms of biological role, the small GTPases Rab are key regulators of intracellular membrane trafficking, from the formation of transport vesicles to their fusion with membranes. Rabs cycle between an inactive GDP-bound form and an active GTP-bound form that is able to recruit to membranes different set of downstream effectors directly responsible for vesicle formation, movement, tethering and fusion. RAB26 mediates transport of ADRA2A and ADRA2B from the Golgi to the cell membrane. Plays a role in the maturation of zymogenic granules and in pepsinogen secretion in the stomach. Plays a role in the secretion of amylase from acinar granules in the parotid gland. In Rattus norvegicus (Rat), this protein is Ras-related protein Rab-26.